We begin with the raw amino-acid sequence, 355 residues long: MKFQNVHISHQDEDKEKLLPNDKDVEKADESPSSSRPSFVFKCYVIASMTFIWTAYTLTIKYTRSTVNPDMMYSSTSVVLCAEILKLVITFAMFYKECNFDSRQFSEQVSKYYINAPRELAKMSVPSFAYALQNNLDFVGLSNLDAGLYQVTTQLKVVSTAFFMMLFLGRKFSTRRWMAITLLMFGVAFVQMNNVSASEANTKRETAENYIVGLSAVLATCVTAGFAGVYFEKMLKDGGSTPFWIRNMQMYSCGVISASIACLTDFSRISDKGFFFGYTDKVWAVVILLGVGGLYISLVMRYLDNLYKSMASAVSIILVVVLSMLIFPDIFIGMYFVLGTICVVLAVLLYNSVNE.

The disordered stretch occupies residues 1–36 (MKFQNVHISHQDEDKEKLLPNDKDVEKADESPSSSR). The span at 9-30 (SHQDEDKEKLLPNDKDVEKADE) shows a compositional bias: basic and acidic residues. 6 helical membrane-spanning segments follow: residues 40-60 (VFKC…TLTI), 177-197 (WMAI…NVSA), 211-231 (IVGL…GVYF), 282-302 (VWAV…VMRY), 309-329 (SMAS…IFPD), and 330-350 (IFIG…VLLY).

It belongs to the nucleotide-sugar transporter family. SLC35A subfamily.

It localises to the membrane. It is found in the cytoplasmic granule membrane. The polypeptide is UDP-galactose translocator 1 (ugtp-1) (Caenorhabditis elegans).